The sequence spans 405 residues: Glutamate-pyruvate aminotransferase AlaA (405 aa).

Gly41 and Asn179 together coordinate L-alanine. Position 240 is an N6-(pyridoxal phosphate)lysine (Lys240). Arg378 contributes to the L-alanine binding site.

It belongs to the class-I pyridoxal-phosphate-dependent aminotransferase family. As to quaternary structure, homodimer. Pyridoxal 5'-phosphate is required as a cofactor.

Its subcellular location is the cytoplasm. The enzyme catalyses L-alanine + 2-oxoglutarate = pyruvate + L-glutamate. The protein operates within amino-acid biosynthesis; L-alanine biosynthesis. In terms of biological role, involved in the biosynthesis of alanine. Catalyzes the transamination of pyruvate by glutamate, leading to the formation of L-alanine and 2-oxoglutarate. Is also able to catalyze the reverse reaction. In Escherichia coli (strain K12), this protein is Glutamate-pyruvate aminotransferase AlaA.